The following is a 3678-amino-acid chain: Dystrophin (3678 aa).

The tract at residues 1 to 240 (MLWWEEVEDC…YITSLFQVLP (240 aa)) is actin-binding. Calponin-homology (CH) domains are found at residues 15–119 (DVQK…LHWQ) and 134–240 (TNSE…QVLP). The segment at 63–72 (PKEKGSTRVH) is ANK2- and ANK-3 binding. Residues 313–333 (DSTQSPYPSQHLEAPRDKSLD) form a disordered region. Spectrin repeat units follow at residues 341 to 449 (VNLD…KLHK), 450 to 558 (VLMD…VLQD), 561 to 669 (LKWQ…QISQ), 721 to 830 (ELRK…WLEY), 832 to 936 (TNII…ELQT), 945 to 1047 (RYQE…KLEE), 1050 to 1156 (NKLR…ALKA), 1159 to 1265 (DKTV…TLEE), 1268 to 1369 (ACWH…LLEQ), 1370 to 1465 (SIQS…LFQK), 1470 to 1570 (EQRL…QLEK), 1573 to 1678 (KLSR…LLLE), 1681 to 1780 (KHME…KASI), 1781 to 1876 (PLKE…KALE), 1879 to 1981 (HQWY…TLHE), 1994 to 2103 (DVSY…RFDR), 2106 to 2210 (EKWR…RIEE), 2213 to 2318 (NVLS…ELEV), 2319 to 2416 (HLKD…LRTK), 2468 to 2570 (FNRA…QLNE), 2573 to 2679 (KDST…ALEE), 2682 to 2795 (RLLQ…HLEA), 2801 to 2923 (KRLH…RKID), and 2928 to 3033 (RLQE…QLHE). Positions 1417 to 1915 (SDLTSHEISL…PEPRDERKLK (499 aa)) are interaction with SYNM. Positions 3048-3081 (TSVQGPWERAISPNKVPYYINHETQTTCWDHPKM) constitute a WW domain. Residues 3051-3401 (QGPWERAISP…TVLEGDNMET (351 aa)) are interaction with SYNM. A ZZ-type; degenerate zinc finger spans residues 3301–3357 (KHQAKCNICKECPIIGFRYRSLKHFNYDICQSCFFSGRVAKGHKMHYPMVEYCTPTT). Zn(2+)-binding residues include cysteine 3306, cysteine 3309, cysteine 3330, and cysteine 3333. The segment at 3459–3511 (DDEHLLIQHYCQSLNQDSPLSQPRSPAQILISLESEERGELERILADLEEENR) is binds to SNTB1. A phosphoserine mark is found at serine 3476, serine 3483, and serine 3493. Disordered regions lie at residues 3521–3547 (KQQH…QSPR) and 3596–3678 (EAKV…EDTM). Polar residues-rich tracts occupy residues 3600 to 3619 (NGTT…SSQP) and 3655 to 3665 (QLNNSFPSSRG). Phosphoserine is present on residues serine 3605, serine 3606, serine 3610, serine 3616, serine 3617, and serine 3659.

In terms of assembly, interacts with SYNM. Interacts with the syntrophins SNTG1 and SNTG2. Interacts with KRT19. Component of the dystrophin-associated glycoprotein complex which is composed of three subcomplexes: a cytoplasmic complex comprised of DMD (or UTRN), DTNA and a number of syntrophins, such as SNTB1, SNTB2, SNTG1 and SNTG2, the transmembrane dystroglycan complex, and the sarcoglycan-sarcospan complex. Interacts with DAG1 (betaDAG1) with DMD; the interaction is inhibited by phosphorylation on the PPXY motif of DAG1. Interacts with SYNM; SNTA1 and SNTB1. Interacts with CMYA5. Directly interacts with ANK2 and ANK3; these interactions do not interfere with betaDAG1-binding and are necessary for proper localization in muscle cells. Identified in a dystroglycan complex that contains at least PRX, DRP2, UTRN, DMD and DAG1. Interacts with DTNB. Interacts with PGM5; the interaction is direct. Interacts with NOS1; localizes NOS1 to sarcolemma in muscle cells. In terms of tissue distribution, detected in quadriceps muscle and in sciatic nerve (at protein level). Expressed in the sarcolemma of the soleus muscle (at protein level). Differentially expressed during skeletal muscle, heart, and brain development. Also expressed in retina.

It is found in the cell membrane. The protein resides in the sarcolemma. Its subcellular location is the cytoplasm. The protein localises to the cytoskeleton. It localises to the postsynaptic cell membrane. Anchors the extracellular matrix to the cytoskeleton via F-actin. Ligand for dystroglycan. Component of the dystrophin-associated glycoprotein complex which accumulates at the neuromuscular junction (NMJ) and at a variety of synapses in the peripheral and central nervous systems and has a structural function in stabilizing the sarcolemma. Also implicated in signaling events and synaptic transmission. This is Dystrophin (Dmd) from Mus musculus (Mouse).